A 553-amino-acid chain; its full sequence is Cytokine-like nuclear factor N-PAC (553 aa).

Positions 8–66 constitute a PWWP domain; that stretch reads LGDLVWGKLGRYPPWPGKIVNPPKDLKKPRGKKCFFVKFFGTEDHAWIKVEQLKPYHAH. Basic and acidic residues-rich tracts occupy residues 92 to 145 and 162 to 182; these read RAKG…EGKK and RAQE…KDLT. The interval 92-188 is disordered; sequence RAKGKDQTSS…KDLTIPESST (97 aa). S130 is modified (phosphoserine). A Glycyl lysine isopeptide (Lys-Gly) (interchain with G-Cter in SUMO2) cross-link involves residue K135. S167 carries the phosphoserine modification. Residues 168-180 constitute a DNA-binding region (a.T hook); sequence PRKRGRPPKDEKD. Glycyl lysine isopeptide (Lys-Gly) (interchain with G-Cter in SUMO2) cross-links involve residues K176, K179, K201, and K211. The interval 214–217 is interaction with histone H3; that stretch reads DPHF. An interaction with KDM1B region spans residues 216-225; sequence HFHHFLLSQT. Glycyl lysine isopeptide (Lys-Gly) (interchain with G-Cter in SUMO2) cross-links involve residues K227, K237, K240, and K269. Residues 261-553 are dehydrogenase domain; the sequence is GSITPTDKKI…MSAVYRAYIH (293 aa). 271–285 serves as a coordination point for NAD(+); that stretch reads GFLGLGLMGSGIVSN. Residue K302 forms a Glycyl lysine isopeptide (Lys-Gly) (interchain with G-Cter in SUMO2) linkage. Residues T362 and K505 each contribute to the NAD(+) site. Position 540 is a phosphoserine (S540).

This sequence belongs to the HIBADH-related family. NP60 subfamily. Homotetramere. Interacts with MAPK14. Interacts with KDM1B at nucleosomes; this interaction stimulates H3K4me1 and H3K4me2 demethylation. Binds to mononucleosomes. Interacts with GATA4; the interaction is required for a synergistic activation of GATA4 target genes transcription.

The protein localises to the nucleus. The protein resides in the chromosome. Cytokine-like nuclear factor with chromatin gene reader activity involved in chromatin modification and regulation of gene expression. Acts as a nucleosome-destabilizing factor that is recruited to genes during transcriptional activation. Recognizes and binds histone H3 without a preference for specific epigenetic markers and also binds DNA. Interacts with KDM1B and promotes its histone demethylase activity by facilitating the capture of H3 tails, they form a multifunctional enzyme complex that modifies transcribed chromatin and facilitates Pol II transcription through nucleosomes. Stimulates the acetylation of 'Lys-56' of nucleosomal histone H3 (H3K56ac) by EP300. With GATA4, co-binds a defined set of heart development genes and coregulates their expression during cardiomyocyte differentiation. Regulates p38 MAP kinase activity by mediating stress activation of MAPK14/p38alpha and specifically regulating MAPK14 signaling. Indirectly promotes phosphorylation of MAPK14 and activation of ATF2. The phosphorylation of MAPK14 requires upstream activity of MAP2K4 and MAP2K6. The protein is Cytokine-like nuclear factor N-PAC of Homo sapiens (Human).